We begin with the raw amino-acid sequence, 430 residues long: Asparagine--tRNA ligase (430 aa).

This sequence belongs to the class-II aminoacyl-tRNA synthetase family.

Its subcellular location is the cytoplasm. It carries out the reaction tRNA(Asn) + L-asparagine + ATP = L-asparaginyl-tRNA(Asn) + AMP + diphosphate + H(+). This Thermococcus gammatolerans (strain DSM 15229 / JCM 11827 / EJ3) protein is Asparagine--tRNA ligase.